A 449-amino-acid chain; its full sequence is Mycosin-1 (449 aa).

The first 23 residues, 1 to 23 (MQRVAVMVLAVLLALFSAPPAWA), serve as a signal peptide directing secretion. A disulfide bridge links cysteine 51 with cysteine 120. The Peptidase S8 domain occupies 66-389 (PWANDYLRIQ…AGVIDPVAAL (324 aa)). Active-site charge relay system residues include aspartate 92 and histidine 123. 2 disordered regions span residues 160–179 (FQPK…QTAG) and 240–259 (TGQD…SDPR). Residues 170-179 (NDPNTTQTAG) are compositionally biased toward polar residues. Cysteines 206 and 244 form a disulfide. Catalysis depends on serine 334, which acts as the Charge relay system. The chain crosses the membrane as a helical span at residues 421-441 (ITAVVIAGATLAFALGIGALA).

Belongs to the peptidase S8 family.

It is found in the cell membrane. In terms of biological role, may play a dual role in regulation of ESX-1 secretion and virulence. Acts as a protease that cleaves EspB. The polypeptide is Mycosin-1 (Mycolicibacterium smegmatis (strain ATCC 700084 / mc(2)155) (Mycobacterium smegmatis)).